We begin with the raw amino-acid sequence, 403 residues long: Protein IQ-DOMAIN 23 (403 aa).

Residues 1-43 (MGFFGRLFGSKKKSDKAASSRDKRRWSFTTRSSNSSKRAPAVT) form a disordered region. The Nuclear localization signal motif lies at 10–17 (SKKKSDKA). The span at 27–43 (SFTTRSSNSSKRAPAVT) shows a compositional bias: polar residues. The interval 115–133 (QENIAAMKIQSAFRGYLAR) is calmodulin-binding. IQ domains follow at residues 116–144 (ENIAAMKIQSAFRGYLARRALRALKALVK) and 145–167 (LQALVRGHIVRKQTADMLRRMQT). 3 disordered regions span residues 176–208 (RARASRSSHSSASFHSSTALLFPSSSSSPRSLH), 242–301 (ILEV…PTSR), and 381–403 (GGDSDRLNRNQSAKSRMHSSFLV). The span at 257–267 (LRSERNNESPR) shows a compositional bias: basic and acidic residues.

This sequence belongs to the IQD family. As to quaternary structure, binds to multiple calmodulin (CaM) in the presence of Ca(2+) and CaM-like proteins.

It localises to the nucleus. The protein localises to the nucleolus. Its subcellular location is the cytoplasm. It is found in the cytoskeleton. The protein resides in the cell membrane. May be involved in cooperative interactions with calmodulins or calmodulin-like proteins. Recruits calmodulin proteins to microtubules, thus being a potential scaffold in cellular signaling and trafficking. May associate with nucleic acids and regulate gene expression at the transcriptional or post-transcriptional level. The protein is Protein IQ-DOMAIN 23 of Arabidopsis thaliana (Mouse-ear cress).